Here is a 500-residue protein sequence, read N- to C-terminus: MCSVCEGSAEGLVTRKRTHSGGGRSAGSKRKWHRRMGGLSFLIFFVIGSLFSGLMFALLSYAPSYRSRVTPHYLPDGRFLQIADEARVLEPYLSAAVRLPDSLNGTPAGKQQQTARSNEQEALSSLKVAVEMKLMGKDDKALRLFQHAMALSPRHPEILTKYGEFLEHSQQDIVTADHYYYQALTVNPSHSEALANRQRTASIVEHLDQKRFERLDKKRDALSSVHALDAGLKRAEKEAYIQHIYHSVGIEGNTMSLAQTRSILETKMAVDGKSIDEHNEILGLDAAMKYINATLVNKNDFITLKDLLEIHRRVLGHVDPVEGGEFRRTQVYVGGHIPPGPGDLSILMSRFEGWLNAEQSFLMHPVRYAAMAHYKLVHIHPFSDGNGRTSRLLMNTLLMRAGYPPVIIQKQHRHKYYDYLQVANEGDIRPFVRFIADCTERTLDLYLWATSELSHPVPLLAQEEMGGAIGEREHGFGREGGSTVHEGSGTGDSIRIGTMW.

Residues 39–59 (LSFLIFFVIGSLFSGLMFALL) form a helical membrane-spanning segment. 2 TPR repeats span residues 122–155 (ALSS…SPRH) and 156–190 (PEIL…NPSH). The Inhibitory (S/T)XXXE(G/N) motif motif lies at 247-252 (SVGIEG). Residues Glu251 and 333-336 (VGGH) each bind ATP. In terms of domain architecture, Fido spans 302-437 (ITLKDLLEIH…IRPFVRFIAD (136 aa)). His380 is an active-site residue. ATP is bound by residues 384 to 391 (DGNGRTSR), 416 to 417 (YY), and Asn424. A disordered region spans residues 477–500 (GREGGSTVHEGSGTGDSIRIGTMW).

This sequence belongs to the fic family. As to quaternary structure, homodimer.

The protein localises to the membrane. It carries out the reaction L-tyrosyl-[protein] + ATP = O-(5'-adenylyl)-L-tyrosyl-[protein] + diphosphate. It catalyses the reaction L-threonyl-[protein] + ATP = 3-O-(5'-adenylyl)-L-threonyl-[protein] + diphosphate. The catalysed reaction is 3-O-(5'-adenylyl)-L-threonyl-[protein] + H2O = L-threonyl-[protein] + AMP + H(+). With respect to regulation, the side chain of Glu-251 determines which of the two opposing activities (AMPylase or de-AMPylase) will take place. In response to endoplasmic reticulum stress, mediates de-AMPylase activity. Adenylyltransferase activity is inhibited by the inhibitory helix present at the N-terminus: Glu-251 binds ATP and competes with ATP-binding at Arg-391, thereby preventing adenylyltransferase activity. In unstressed cells, disengagement of Glu-251 promotes adenylyltransferase activity. Activation dissociates ATP-binding from Glu-251, allowing ordered binding of the entire ATP moiety with the alpha-phosphate in an orientation that is productive for accepting an incoming target hydroxyl side chain. Functionally, protein that can both mediate the addition of adenosine 5'-monophosphate (AMP) to specific residues of target proteins (AMPylation), and the removal of the same modification from target proteins (de-AMPylation), depending on the context. The side chain of Glu-251 determines which of the two opposing activities (AMPylase or de-AMPylase) will take place. Acts as a key regulator of the unfolded protein response (UPR) by mediating AMPylation or de-AMPylation of Hsc70-3/BiP. In unstressed cells, acts as an adenylyltransferase by mediating AMPylation of Hsc70-3/BiP at 'Thr-518', thereby inactivating it. In response to endoplasmic reticulum stress, acts as a phosphodiesterase by mediating removal of ATP (de-AMPylation) from Hsc70-3/BiP at 'Thr-518', leading to restore HSPA5/BiP activity. The chain is Protein adenylyltransferase Fic from Culex quinquefasciatus (Southern house mosquito).